Consider the following 144-residue polypeptide: MSNAYEEYMRQMVIPMRQELVRSGFEELTTEEAVTEFMENTTGTTLVVVNSVCGCAAGLARPSAGQAVVRAEKQPDHLVTVFAGQDKDATAKMREYFGEIPPSSPSMALLKGKEVVHFIHRHEIEGATMDEIITNLEQAFEKNC.

This sequence belongs to the bacilliredoxin family.

The chain is Bacilliredoxin BCE33L1972 from Bacillus cereus (strain ZK / E33L).